A 273-amino-acid polypeptide reads, in one-letter code: Large ribosomal subunit protein uL2 (273 aa).

Disordered stretches follow at residues Lys28–His53 and Arg221–Lys273. Residues Lys39–Arg48 show a composition bias toward low complexity.

Belongs to the universal ribosomal protein uL2 family. As to quaternary structure, part of the 50S ribosomal subunit. Forms a bridge to the 30S subunit in the 70S ribosome.

One of the primary rRNA binding proteins. Required for association of the 30S and 50S subunits to form the 70S ribosome, for tRNA binding and peptide bond formation. It has been suggested to have peptidyltransferase activity; this is somewhat controversial. Makes several contacts with the 16S rRNA in the 70S ribosome. The chain is Large ribosomal subunit protein uL2 from Klebsiella pneumoniae (strain 342).